Here is a 102-residue protein sequence, read N- to C-terminus: Small ribosomal subunit protein uS10 (102 aa).

It belongs to the universal ribosomal protein uS10 family. In terms of assembly, part of the 30S ribosomal subunit.

Its function is as follows. Involved in the binding of tRNA to the ribosomes. The sequence is that of Small ribosomal subunit protein uS10 from Brucella abortus (strain S19).